Reading from the N-terminus, the 258-residue chain is MGLSGKNVIFVGGLGFIGYEACKQLMAKNMASFFVFDVLDKPEDIKALQALNPKTKVYYTKFDITSKQSIKSALADVVSKVKYIDALINGAGILTDLNVELTMNINLIGLINTTLEALPLMDKNKQGRGGVIVNIASVLGLEPCPPAAVYCASKFGVMGFSRSIGDPYYYNITGVAVVTFCPGLTETPLKNNIGSKYTFEYSKKISEELNNTKTQKPEVCGAHLAQVVESHENGGIYISNQGTLAKVTPTVYWQPTYH.

9–33 (IFVGGLGFIGYEACKQLMAKNMASF) provides a ligand contact to NAD(+). Serine 137 contributes to the substrate binding site. Catalysis depends on tyrosine 150, which acts as the Proton acceptor.

It belongs to the short-chain dehydrogenases/reductases (SDR) family. In terms of assembly, homodimer.

It catalyses the reaction a primary alcohol + NAD(+) = an aldehyde + NADH + H(+). It carries out the reaction a secondary alcohol + NAD(+) = a ketone + NADH + H(+). This is Alcohol dehydrogenase 2 (ADH2) from Ceratitis cosyra (Mango fruit fly).